We begin with the raw amino-acid sequence, 293 residues long: MAWVQIRLNSTNEKAETISDYLEEIGSVSVTFMDSQDTPIFEPLPGETRLWGNTDVIALFDAETDMQQIVRLLRQEGHLDENTAYKIEQIEDKDWEREWMDNFHPMQFGKRLWICPSWREVPDPNAVNVMLDPGLAFGTGTHPTTALCLEWLDGLDLAGKTVIDFGCGSGILAIAALKLGAKEAIGIDIDPQAILASRNNAEQNGVADRLKLYLSEDKPANMKAEVVVANILAGPLKELYPVISELVKEKGNLGLSGILATQAESVCEAYQAKFDLDAVVEREEWCRITGKLK.

The S-adenosyl-L-methionine site is built by Thr-145, Gly-166, Asp-188, and Asn-230.

The protein belongs to the methyltransferase superfamily. PrmA family.

Its subcellular location is the cytoplasm. It carries out the reaction L-lysyl-[protein] + 3 S-adenosyl-L-methionine = N(6),N(6),N(6)-trimethyl-L-lysyl-[protein] + 3 S-adenosyl-L-homocysteine + 3 H(+). Functionally, methylates ribosomal protein L11. This is Ribosomal protein L11 methyltransferase from Mannheimia succiniciproducens (strain KCTC 0769BP / MBEL55E).